We begin with the raw amino-acid sequence, 517 residues long: Lysophosphatidylcholine acyltransferase 1 (517 aa).

The Cytoplasmic segment spans residues 1-52; the sequence is MRFPNRKLHTAVNGGDSGVSTHFRNPFVHELRFTTLQKLKIAVMTVTLFPVR. The helical; Signal-anchor for type II membrane protein transmembrane segment at 53–73 threads the bilayer; sequence LLFAAFMMLLAWPFAFVATVG. At 74–517 the chain is on the lumenal side; that stretch reads RSENAVEPLS…SPRNHSKKQD (444 aa). Positions 129 to 134 match the HXXXXD motif motif; sequence HSSYFD. An N-linked (GlcNAc...) asparagine glycan is attached at N207. Residues 443 to 478 enclose the EF-hand domain; sequence VGDLAVSELFRAIDSQDKGKITFDELCSFMEKCPDL. N511 carries N-linked (GlcNAc...) asparagine glycosylation. Positions 514 to 517 match the Di-lysine motif motif; the sequence is KKQD.

Belongs to the 1-acyl-sn-glycerol-3-phosphate acyltransferase family.

The protein resides in the endoplasmic reticulum membrane. Its subcellular location is the golgi apparatus membrane. It is found in the cell membrane. The protein localises to the lipid droplet. It carries out the reaction a 1-acyl-sn-glycero-3-phosphocholine + an acyl-CoA = a 1,2-diacyl-sn-glycero-3-phosphocholine + CoA. The catalysed reaction is a 1-O-alkyl-sn-glycero-3-phosphocholine + acetyl-CoA = a 1-O-alkyl-2-acetyl-sn-glycero-3-phosphocholine + CoA. It catalyses the reaction a 1-acyl-sn-glycero-3-phosphate + an acyl-CoA = a 1,2-diacyl-sn-glycero-3-phosphate + CoA. The enzyme catalyses a 1-O-(1Z-alkenyl)-sn-glycero-3-phosphocholine + an acyl-CoA = a 1-O-(1Z-alkenyl)-2-acyl-sn-glycero-3-phosphocholine + CoA. It carries out the reaction 1-acyl-sn-glycero-3-phospho-(1'-sn-glycerol) + an acyl-CoA = a 1,2-diacyl-sn-glycero-3-phospho-(1'-sn-glycerol) + CoA. The catalysed reaction is 1-hexadecanoyl-sn-glycero-3-phosphocholine + hexadecanoyl-CoA = 1,2-dihexadecanoyl-sn-glycero-3-phosphocholine + CoA. It catalyses the reaction 1-O-hexadecyl-sn-glycero-3-phosphocholine + hexadecanoyl-CoA = 1-O-hexadecyl-2-hexadecanoyl-sn-glycero-3-phosphocholine + CoA. The enzyme catalyses a 1-O-(1Z-alkenyl)-sn-glycero-3-phosphocholine + hexadecanoyl-CoA = 1-O-(1Z)-alkenyl-2-hexadecanoyl-sn-glycero-3-phosphocholine + CoA. It carries out the reaction 1-hexadecanoyl-sn-glycero-3-phospho-(1'-sn-glycerol) + hexadecanoyl-CoA = 1,2-dihexadecanoyl-sn-glycero-3-phospho-(1'-sn-glycerol) + CoA. The catalysed reaction is 1-dodecanoyl-sn-glycero-3-phosphocholine + hexadecanoyl-CoA = 1-dodecanoyl-2-hexadecanoyl-sn-glycero-3-phosphocholine + CoA. It catalyses the reaction 1-tetradecanoyl-sn-glycero-3-phosphocholine + hexadecanoyl-CoA = 1-tetradecanoyl-2-hexadecanoyl-sn-glycero-3-phosphocholine + CoA. The enzyme catalyses 1-O-octadecyl-sn-glycero-3-phosphocholine + hexadecanoyl-CoA = 1-O-octadecyl-2-hexadecanoyl-sn-glycero-3-phosphocholine + CoA. It carries out the reaction 1-octadecanoyl-sn-glycero-3-phosphocholine + hexadecanoyl-CoA = 1-octadecanoyl-2-hexadecanoyl-sn-glycero-3-phosphocholine + CoA. The catalysed reaction is 1-(9Z-octadecenoyl)-sn-glycero-3-phosphocholine + hexadecanoyl-CoA = 1-(9Z-octadecenoyl)-2-hexadecanoyl-sn-glycero-3-phosphocholine + CoA. It catalyses the reaction 1-eicosanoyl-sn-glycero-3-phosphocholine + hexadecanoyl-CoA = 1-eicosanoyl-2-hexadecanoyl-sn-glycero-3-phosphocholine + CoA. The enzyme catalyses hexanoyl-CoA + 1-hexadecanoyl-sn-glycero-3-phosphocholine = 1-hexadecanoyl-2-hexanoyl-sn-glycero-3-phosphocholine + CoA. It carries out the reaction octanoyl-CoA + 1-hexadecanoyl-sn-glycero-3-phosphocholine = 1-hexadecanoyl-2-octanoyl-sn-glycero-3-phosphocholine + CoA. The catalysed reaction is decanoyl-CoA + 1-hexadecanoyl-sn-glycero-3-phosphocholine = 1-hexadecanoyl-2-decanoyl-sn-glycero-3-phosphocholine + CoA. It catalyses the reaction dodecanoyl-CoA + 1-hexadecanoyl-sn-glycero-3-phosphocholine = 1-hexadecanoyl-2-dodecanoyl-sn-glycero-3-phosphocholine + CoA. The enzyme catalyses tetradecanoyl-CoA + 1-hexadecanoyl-sn-glycero-3-phosphocholine = 1-hexadecanoyl-2-tetradecanoyl-sn-glycero-3-phosphocholine + CoA. It carries out the reaction 1-hexadecanoyl-sn-glycero-3-phosphocholine + (9Z)-octadecenoyl-CoA = 1-hexadecanoyl-2-(9Z-octadecenoyl)-sn-glycero-3-phosphocholine + CoA. The catalysed reaction is (9Z,12Z)-octadecadienoyl-CoA + 1-hexadecanoyl-sn-glycero-3-phosphocholine = 1-hexadecanoyl-2-(9Z,12Z-octadecadienoyl)-sn-glycero-3-phosphocholine + CoA. It catalyses the reaction (4Z,7Z,10Z,13Z,16Z,19Z)-docosahexaenoyl-CoA + 1-hexadecanoyl-sn-glycero-3-phosphocholine = 1-hexadecanoyl-2-(4Z,7Z,10Z,13Z,16Z,19Z-docosahexaenoyl)-sn-glycero-3-phosphocholine + CoA. The enzyme catalyses 1-hexadecanoyl-sn-glycero-3-phosphocholine + acetyl-CoA = 1-hexadecanoyl-2-acetyl-sn-glycero-3-phosphocholine + CoA. It carries out the reaction eicosanoyl-CoA + 1-hexadecanoyl-sn-glycero-3-phosphocholine = 1-hexadecanoyl-2-eicosanoyl-sn-glycero-3-phosphocholine + CoA. The catalysed reaction is 1-O-hexadecyl-sn-glycero-3-phosphocholine + acetyl-CoA = 1-O-hexadecyl-2-acetyl-sn-glycero-3-phosphocholine + CoA. It catalyses the reaction a 1-acyl-sn-glycero-3-phosphocholine + hexadecanoyl-CoA = 1-acyl-2-hexadecanoyl-sn-glycero-3-phosphocholine + CoA. The enzyme catalyses a 1-acyl-sn-glycero-3-phosphate + hexadecanoyl-CoA = 1-acyl-2-hexadecanoyl-sn-glycero-3-phosphate + CoA. It carries out the reaction 1-acyl-sn-glycero-3-phospho-(1'-sn-glycerol) + hexadecanoyl-CoA = 1-acyl-2-hexadecanoyl-sn-glycero-3-phospho-(1'-sn-glycerol) + CoA. The protein operates within lipid metabolism; phospholipid metabolism. Exhibits both acyltransferase and acetyltransferase activities. Activity is calcium-independent. Catalyzes the conversion of lysophosphatidylcholine (1-acyl-sn-glycero-3-phosphocholine or LPC) into phosphatidylcholine (1,2-diacyl-sn-glycero-3-phosphocholine or PC). Catalyzes the conversion 1-acyl-sn-glycerol-3-phosphate (lysophosphatidic acid or LPA) into 1,2-diacyl-sn-glycerol-3-phosphate (phosphatidic acid or PA) by incorporating an acyl moiety at the sn-2 position of the glycerol backbone. In Danio rerio (Zebrafish), this protein is Lysophosphatidylcholine acyltransferase 1 (lpcat1).